The chain runs to 239 residues: Uridylate kinase (239 aa).

An ATP-binding site is contributed by 12 to 15 (KLSG). Residues 20–25 (GDQGAG) are involved in allosteric activation by GTP. UMP is bound at residue Gly54. Positions 55 and 59 each coordinate ATP. UMP is bound by residues Asp74 and 135–142 (TGNPFFTT). Thr162, Tyr168, and Asp171 together coordinate ATP.

This sequence belongs to the UMP kinase family. In terms of assembly, homohexamer.

The protein localises to the cytoplasm. It catalyses the reaction UMP + ATP = UDP + ADP. It participates in pyrimidine metabolism; CTP biosynthesis via de novo pathway; UDP from UMP (UMPK route): step 1/1. Its activity is regulated as follows. Allosterically activated by GTP. Inhibited by UTP. Its function is as follows. Catalyzes the reversible phosphorylation of UMP to UDP. This chain is Uridylate kinase, found in Methylococcus capsulatus (strain ATCC 33009 / NCIMB 11132 / Bath).